The chain runs to 278 residues: uncharacterized protein (278 aa).

This is an uncharacterized protein from Schizosaccharomyces pombe (strain 972 / ATCC 24843) (Fission yeast).